Here is a 647-residue protein sequence, read N- to C-terminus: Chaperone protein DnaK (647 aa).

T200 is subject to Phosphothreonine; by autocatalysis. The span at 611 to 631 (AGEQGAAGAAGAGAQQQAQPQ) shows a compositional bias: low complexity. A disordered region spans residues 611-647 (AGEQGAAGAAGAGAQQQAQPQDDNVVDAEFKEVNDKK). Positions 638–647 (AEFKEVNDKK) are enriched in basic and acidic residues.

The protein belongs to the heat shock protein 70 family.

Functionally, acts as a chaperone. In Cupriavidus taiwanensis (strain DSM 17343 / BCRC 17206 / CCUG 44338 / CIP 107171 / LMG 19424 / R1) (Ralstonia taiwanensis (strain LMG 19424)), this protein is Chaperone protein DnaK.